A 226-amino-acid chain; its full sequence is ATP-dependent Clp protease proteolytic subunit 2 (226 aa).

S118 serves as the catalytic Nucleophile. The active site involves H143.

Belongs to the peptidase S14 family. Fourteen ClpP subunits assemble into 2 heptameric rings which stack back to back to give a disk-like structure with a central cavity, resembling the structure of eukaryotic proteasomes.

The protein resides in the cytoplasm. It carries out the reaction Hydrolysis of proteins to small peptides in the presence of ATP and magnesium. alpha-casein is the usual test substrate. In the absence of ATP, only oligopeptides shorter than five residues are hydrolyzed (such as succinyl-Leu-Tyr-|-NHMec, and Leu-Tyr-Leu-|-Tyr-Trp, in which cleavage of the -Tyr-|-Leu- and -Tyr-|-Trp bonds also occurs).. Cleaves peptides in various proteins in a process that requires ATP hydrolysis. Has a chymotrypsin-like activity. Plays a major role in the degradation of misfolded proteins. The sequence is that of ATP-dependent Clp protease proteolytic subunit 2 from Synechocystis sp. (strain ATCC 27184 / PCC 6803 / Kazusa).